Here is a 44-residue protein sequence, read N- to C-terminus: uncharacterized protein (44 aa).

The helical transmembrane segment at 19-39 threads the bilayer; it reads AVGFVVSFGFFAFLFVMATVI.

Its subcellular location is the cell membrane. This is an uncharacterized protein from Bacillus subtilis (strain 168).